We begin with the raw amino-acid sequence, 498 residues long: Cytochrome P450 monooxygenase astB (498 aa).

Residues 7-27 traverse the membrane as a helical segment; sequence FTTMPVVLLVGLVLYQLLAFT. 3 N-linked (GlcNAc...) asparagine glycosylation sites follow: N237, N248, and N346. C425 is a binding site for heme.

Belongs to the cytochrome P450 family. Heme serves as cofactor.

The protein localises to the membrane. It catalyses the reaction preasperterpenoid A + 4 reduced [NADPH--hemoprotein reductase] + 4 O2 = asperterpenoid A + 4 oxidized [NADPH--hemoprotein reductase] + 5 H2O + 5 H(+). The enzyme catalyses asperterpenoid A + 2 reduced [NADPH--hemoprotein reductase] + 2 O2 = asperterpenoid B + 2 oxidized [NADPH--hemoprotein reductase] + 3 H2O + 3 H(+). The protein operates within secondary metabolite biosynthesis; terpenoid biosynthesis. Its function is as follows. Cytochrome P450 monooxygenase; part of the gene cluster that mediates the biosynthesis of the asperterpenoids, sesterterpenes that exhibit anti-tuberculosis activity. The first step of the pathway is performed by the sesterterpene synthase astC that possesses both prenyl transferase and terpene cyclase activity, converting isopentenyl diphosphate and dimethylallyl diphosphate into geranylfarnesyl diphosphate (GFPP) and further converting GFPP into preasperterpenoid A, respectively. The cytochrome P450 monooxygenase astB then dually oxidizes preasperterpenoid A to produce asperterpenoid A along with a minor product, asperterpenoid B. Finally, the cytochrome P450 monooxygenase astA converts asperterpenoid A into asperterpenoid C. The sequence is that of Cytochrome P450 monooxygenase astB from Talaromyces wortmannii (Penicillium wortmannii).